Reading from the N-terminus, the 57-residue chain is Beta-defensin 3 (57 aa).

Gln16 bears the Pyrrolidone carboxylic acid mark. 3 disulfides stabilise this stretch: Cys24–Cys53, Cys31–Cys46, and Cys36–Cys54.

It belongs to the beta-defensin family. As to expression, neutrophilic granules.

Its subcellular location is the secreted. Has bactericidal activity. Active against E.coli ML35 and S.aureus 502A. The sequence is that of Beta-defensin 3 (DEFB3) from Bos taurus (Bovine).